A 394-amino-acid polypeptide reads, in one-letter code: NAD(P)H-quinone oxidoreductase subunit H (394 aa).

This sequence belongs to the complex I 49 kDa subunit family. NDH-1 can be composed of about 15 different subunits; different subcomplexes with different compositions have been identified which probably have different functions.

Its subcellular location is the cellular thylakoid membrane. It catalyses the reaction a plastoquinone + NADH + (n+1) H(+)(in) = a plastoquinol + NAD(+) + n H(+)(out). It carries out the reaction a plastoquinone + NADPH + (n+1) H(+)(in) = a plastoquinol + NADP(+) + n H(+)(out). NDH-1 shuttles electrons from an unknown electron donor, via FMN and iron-sulfur (Fe-S) centers, to quinones in the respiratory and/or the photosynthetic chain. The immediate electron acceptor for the enzyme in this species is believed to be plastoquinone. Couples the redox reaction to proton translocation, and thus conserves the redox energy in a proton gradient. Cyanobacterial NDH-1 also plays a role in inorganic carbon-concentration. This Synechococcus sp. (strain ATCC 27144 / PCC 6301 / SAUG 1402/1) (Anacystis nidulans) protein is NAD(P)H-quinone oxidoreductase subunit H.